Consider the following 282-residue polypeptide: Bis(5'-nucleosyl)-tetraphosphatase, symmetrical (282 aa).

It belongs to the Ap4A hydrolase family.

It catalyses the reaction P(1),P(4)-bis(5'-adenosyl) tetraphosphate + H2O = 2 ADP + 2 H(+). Hydrolyzes diadenosine 5',5'''-P1,P4-tetraphosphate to yield ADP. This chain is Bis(5'-nucleosyl)-tetraphosphatase, symmetrical, found in Shigella dysenteriae serotype 1 (strain Sd197).